Here is a 245-residue protein sequence, read N- to C-terminus: 2,3-bisphosphoglycerate-dependent phosphoglycerate mutase (245 aa).

Substrate is bound by residues 8–15 (RHGQSLWN), 21–22 (TG), R60, 87–90 (ERHY), K98, 114–115 (RR), and 183–184 (GN). H9 serves as the catalytic Tele-phosphohistidine intermediate. E87 (proton donor/acceptor) is an active-site residue.

Belongs to the phosphoglycerate mutase family. BPG-dependent PGAM subfamily.

It catalyses the reaction (2R)-2-phosphoglycerate = (2R)-3-phosphoglycerate. The protein operates within carbohydrate degradation; glycolysis; pyruvate from D-glyceraldehyde 3-phosphate: step 3/5. Catalyzes the interconversion of 2-phosphoglycerate and 3-phosphoglycerate. The sequence is that of 2,3-bisphosphoglycerate-dependent phosphoglycerate mutase from Bacillus cytotoxicus (strain DSM 22905 / CIP 110041 / 391-98 / NVH 391-98).